The chain runs to 81 residues: Sulfur carrier protein TusA (81 aa).

C19 serves as the catalytic Cysteine persulfide intermediate.

The protein belongs to the sulfur carrier protein TusA family.

The protein localises to the cytoplasm. Sulfur carrier protein which probably makes part of a sulfur-relay system. This chain is Sulfur carrier protein TusA, found in Shewanella woodyi (strain ATCC 51908 / MS32).